A 177-amino-acid polypeptide reads, in one-letter code: Large ribosomal subunit protein uL6 (177 aa).

It belongs to the universal ribosomal protein uL6 family. As to quaternary structure, part of the 50S ribosomal subunit.

In terms of biological role, this protein binds to the 23S rRNA, and is important in its secondary structure. It is located near the subunit interface in the base of the L7/L12 stalk, and near the tRNA binding site of the peptidyltransferase center. The protein is Large ribosomal subunit protein uL6 of Hydrogenovibrio crunogenus (strain DSM 25203 / XCL-2) (Thiomicrospira crunogena).